The primary structure comprises 187 residues: UPF0398 protein MW1336 (187 aa).

This sequence belongs to the UPF0398 family.

This Staphylococcus aureus (strain MW2) protein is UPF0398 protein MW1336.